A 103-amino-acid polypeptide reads, in one-letter code: Pyrimidine/purine nucleoside phosphorylase (103 aa).

The protein belongs to the nucleoside phosphorylase PpnP family.

It carries out the reaction a purine D-ribonucleoside + phosphate = a purine nucleobase + alpha-D-ribose 1-phosphate. The enzyme catalyses adenosine + phosphate = alpha-D-ribose 1-phosphate + adenine. The catalysed reaction is cytidine + phosphate = cytosine + alpha-D-ribose 1-phosphate. It catalyses the reaction guanosine + phosphate = alpha-D-ribose 1-phosphate + guanine. It carries out the reaction inosine + phosphate = alpha-D-ribose 1-phosphate + hypoxanthine. The enzyme catalyses thymidine + phosphate = 2-deoxy-alpha-D-ribose 1-phosphate + thymine. The catalysed reaction is uridine + phosphate = alpha-D-ribose 1-phosphate + uracil. It catalyses the reaction xanthosine + phosphate = alpha-D-ribose 1-phosphate + xanthine. Its function is as follows. Catalyzes the phosphorolysis of diverse nucleosides, yielding D-ribose 1-phosphate and the respective free bases. Can use uridine, adenosine, guanosine, cytidine, thymidine, inosine and xanthosine as substrates. Also catalyzes the reverse reactions. This chain is Pyrimidine/purine nucleoside phosphorylase, found in Shewanella denitrificans (strain OS217 / ATCC BAA-1090 / DSM 15013).